The following is a 414-amino-acid chain: Serine hydroxymethyltransferase (414 aa).

(6S)-5,6,7,8-tetrahydrofolate-binding positions include Leu-116 and 120 to 122 (GHL). Lys-224 is modified (N6-(pyridoxal phosphate)lysine). (6S)-5,6,7,8-tetrahydrofolate-binding positions include Glu-240 and 348–350 (SPF).

The protein belongs to the SHMT family. In terms of assembly, homodimer. Requires pyridoxal 5'-phosphate as cofactor.

Its subcellular location is the cytoplasm. It catalyses the reaction (6R)-5,10-methylene-5,6,7,8-tetrahydrofolate + glycine + H2O = (6S)-5,6,7,8-tetrahydrofolate + L-serine. It participates in one-carbon metabolism; tetrahydrofolate interconversion. The protein operates within amino-acid biosynthesis; glycine biosynthesis; glycine from L-serine: step 1/1. Its function is as follows. Catalyzes the reversible interconversion of serine and glycine with tetrahydrofolate (THF) serving as the one-carbon carrier. This reaction serves as the major source of one-carbon groups required for the biosynthesis of purines, thymidylate, methionine, and other important biomolecules. Also exhibits THF-independent aldolase activity toward beta-hydroxyamino acids, producing glycine and aldehydes, via a retro-aldol mechanism. The polypeptide is Serine hydroxymethyltransferase (Campylobacter fetus subsp. fetus (strain 82-40)).